Reading from the N-terminus, the 29-residue chain is Cyclotide psyleio A (29 aa).

The cyclopeptide (Gly-Asp) cross-link spans 1–29 (GLPICGETCFTGTCNTPGCSCTYPICTRD). Cystine bridges form between C5–C19, C9–C21, and C14–C26.

Post-translationally, this is a cyclic peptide.

Its function is as follows. Probably participates in a plant defense mechanism. In Psychotria brachyceras, this protein is Cyclotide psyleio A.